The primary structure comprises 157 residues: SsrA-binding protein (157 aa).

It belongs to the SmpB family.

The protein localises to the cytoplasm. Its function is as follows. Required for rescue of stalled ribosomes mediated by trans-translation. Binds to transfer-messenger RNA (tmRNA), required for stable association of tmRNA with ribosomes. tmRNA and SmpB together mimic tRNA shape, replacing the anticodon stem-loop with SmpB. tmRNA is encoded by the ssrA gene; the 2 termini fold to resemble tRNA(Ala) and it encodes a 'tag peptide', a short internal open reading frame. During trans-translation Ala-aminoacylated tmRNA acts like a tRNA, entering the A-site of stalled ribosomes, displacing the stalled mRNA. The ribosome then switches to translate the ORF on the tmRNA; the nascent peptide is terminated with the 'tag peptide' encoded by the tmRNA and targeted for degradation. The ribosome is freed to recommence translation, which seems to be the essential function of trans-translation. In Christiangramia forsetii (strain DSM 17595 / CGMCC 1.15422 / KT0803) (Gramella forsetii), this protein is SsrA-binding protein.